We begin with the raw amino-acid sequence, 451 residues long: Bifunctional protein GlmU (451 aa).

A pyrophosphorylase region spans residues 1–226 (MVAVAILAAG…YLEISGINDR (226 aa)). UDP-N-acetyl-alpha-D-glucosamine-binding positions include 7 to 10 (LAAG), Lys-21, Gln-73, and 78 to 79 (GT). Position 103 (Asp-103) interacts with Mg(2+). UDP-N-acetyl-alpha-D-glucosamine contacts are provided by Gly-140, Glu-155, Asn-170, and Asn-224. Position 224 (Asn-224) interacts with Mg(2+). Residues 227–247 (KQLATAYDILQNRIKDYWMRA) are linker. The segment at 248 to 451 (GVTLIDPDSI…ISGWRMKTDD (204 aa)) is N-acetyltransferase. UDP-N-acetyl-alpha-D-glucosamine contacts are provided by Arg-329 and Lys-347. The Proton acceptor role is filled by His-359. Residues Tyr-362 and Asn-373 each contribute to the UDP-N-acetyl-alpha-D-glucosamine site. Acetyl-CoA contacts are provided by residues Ala-376, 382–383 (NY), Ala-419, and Arg-436.

In the N-terminal section; belongs to the N-acetylglucosamine-1-phosphate uridyltransferase family. This sequence in the C-terminal section; belongs to the transferase hexapeptide repeat family. As to quaternary structure, homotrimer. Requires Mg(2+) as cofactor.

The protein localises to the cytoplasm. The enzyme catalyses alpha-D-glucosamine 1-phosphate + acetyl-CoA = N-acetyl-alpha-D-glucosamine 1-phosphate + CoA + H(+). It carries out the reaction N-acetyl-alpha-D-glucosamine 1-phosphate + UTP + H(+) = UDP-N-acetyl-alpha-D-glucosamine + diphosphate. It participates in nucleotide-sugar biosynthesis; UDP-N-acetyl-alpha-D-glucosamine biosynthesis; N-acetyl-alpha-D-glucosamine 1-phosphate from alpha-D-glucosamine 6-phosphate (route II): step 2/2. The protein operates within nucleotide-sugar biosynthesis; UDP-N-acetyl-alpha-D-glucosamine biosynthesis; UDP-N-acetyl-alpha-D-glucosamine from N-acetyl-alpha-D-glucosamine 1-phosphate: step 1/1. Its pathway is bacterial outer membrane biogenesis; LPS lipid A biosynthesis. Catalyzes the last two sequential reactions in the de novo biosynthetic pathway for UDP-N-acetylglucosamine (UDP-GlcNAc). The C-terminal domain catalyzes the transfer of acetyl group from acetyl coenzyme A to glucosamine-1-phosphate (GlcN-1-P) to produce N-acetylglucosamine-1-phosphate (GlcNAc-1-P), which is converted into UDP-GlcNAc by the transfer of uridine 5-monophosphate (from uridine 5-triphosphate), a reaction catalyzed by the N-terminal domain. The chain is Bifunctional protein GlmU from Gloeothece citriformis (strain PCC 7424) (Cyanothece sp. (strain PCC 7424)).